A 219-amino-acid polypeptide reads, in one-letter code: Ribose-5-phosphate isomerase A (219 aa).

Substrate contacts are provided by residues 28 to 31 (SGST), 81 to 84 (DGAD), and 94 to 97 (KGGG). The active-site Proton acceptor is Glu103. Position 121 (Lys121) interacts with substrate.

This sequence belongs to the ribose 5-phosphate isomerase family. In terms of assembly, homodimer.

It carries out the reaction aldehydo-D-ribose 5-phosphate = D-ribulose 5-phosphate. The protein operates within carbohydrate degradation; pentose phosphate pathway; D-ribose 5-phosphate from D-ribulose 5-phosphate (non-oxidative stage): step 1/1. Catalyzes the reversible conversion of ribose-5-phosphate to ribulose 5-phosphate. This is Ribose-5-phosphate isomerase A from Haemophilus influenzae (strain PittGG).